Reading from the N-terminus, the 445-residue chain is MKHFEANFDGLVGPTHNYAGLSFGNVASLNNAAATSSPKDAAKQGIKKAKALADLGLVQGMFAPQERPDLHTLRRIGFTGSDAEVLNKAAKEAPALLRACCSASSMWTANAATVSPSADTHDGKLHFTPANLVDKLHRSIEPVTTGNILQATFNDSRYFKHHQHLPEHTSFGDEGAANHTRLCSEYGHAGIELFVYGQEATNPSAPKPQKFPARQTLEASQAIARLHQLDDDNTVYMQQNPDVIDQGVFHNDVIAVGNQNVLFYHEQAFLNTQAKLEEIKRKFGESPLHFVEVPTAKVAIQDAVKSYLFNTQVVTLPSGEMAIIAPTNCQENPAVHAYLNELVTLGSPIKQVHYFDVKQSMQNGGGPACLRLRVAMNQDEVAAVNQNTMMNDALFARLNQWVDKHYRDRLSVADLADPQLVIESRTALDELTQIMKLGSVYQFQR.

Substrate-binding positions include 19–28, Asn110, and 137–138; these read AGLSFGNVAS and HR. Glu174 is an active-site residue. Substrate is bound at residue Arg214. Residue His250 is part of the active site. The substrate site is built by Asp252 and Asn363. Cys369 functions as the Nucleophile in the catalytic mechanism.

Belongs to the succinylarginine dihydrolase family. Homodimer.

The enzyme catalyses N(2)-succinyl-L-arginine + 2 H2O + 2 H(+) = N(2)-succinyl-L-ornithine + 2 NH4(+) + CO2. It participates in amino-acid degradation; L-arginine degradation via AST pathway; L-glutamate and succinate from L-arginine: step 2/5. Its function is as follows. Catalyzes the hydrolysis of N(2)-succinylarginine into N(2)-succinylornithine, ammonia and CO(2). This is N-succinylarginine dihydrolase from Shewanella piezotolerans (strain WP3 / JCM 13877).